We begin with the raw amino-acid sequence, 905 residues long: Cadherin-2B (905 aa).

The signal sequence occupies residues 1 to 28 (MCRKQPFLLPTLLGILAALMLQQGPVEA). The propeptide occupies 29-160 (FGGSRLCKTG…NSNGLQRQKR (132 aa)). Cadherin domains are found at residues 161-268 (DWVI…RPEF), 269-383 (LHQI…PPEF), 384-498 (TAMT…NPYF), 499-604 (TPNP…DNAP), and 605-713 (YVYP…TTAP). Residues 161-723 (DWVIPPINVP…IIGTGLGTGA (563 aa)) lie on the Extracellular side of the membrane. Glu171 is a Ca(2+) binding site. The N-linked (GlcNAc...) asparagine glycan is linked to Asn191. The Ca(2+) site is built by Asp227, Glu229, Asp260, Met261, Asn262, Asp263, and Asn264. Residue Asn274 is glycosylated (N-linked (GlcNAc...) asparagine). Residues Asp294, Asp296, and Asn302 each contribute to the Ca(2+) site. An N-linked (GlcNAc...) asparagine glycan is attached at Asn326. Residue Asp354 participates in Ca(2+) binding. Residues Asn403, Asn573, Asn623, Asn651, and Asn692 are each glycosylated (N-linked (GlcNAc...) asparagine). The chain crosses the membrane as a helical span at residues 724-745 (IIAILLCIIILLTLVLMFVVWM). Topologically, residues 746–905 (KRRDKERQAK…LADMYGGSDD (160 aa)) are cytoplasmic. Disordered regions lie at residues 774–800 (EEGGGEEDQDYDLSQLQQPDTMEPDTI) and 862–883 (SGSTAGSLSSLNSSSSGGEQDY). The segment covering 775–784 (EGGGEEDQDY) has biased composition (acidic residues). Positions 862-879 (SGSTAGSLSSLNSSSSGG) are enriched in low complexity.

Homodimer (via extracellular region). Can also form heterodimers with other cadherins (via extracellular region). Dimerization occurs in trans, i.e. with a cadherin chain from another cell.

The protein resides in the cell membrane. Its subcellular location is the sarcolemma. It localises to the cell junction. The protein localises to the cell surface. It is found in the desmosome. The protein resides in the adherens junction. Functionally, calcium-dependent cell adhesion protein; preferentially mediates homotypic cell-cell adhesion. Cadherins may thus contribute to the sorting of heterogeneous cell types, and thereby play an important role during embryonic development. Required for proper neurite branching. Required for pre- and postsynaptic organization. In Xenopus laevis (African clawed frog), this protein is Cadherin-2B (cdh2-b).